Here is a 481-residue protein sequence, read N- to C-terminus: Arf-GAP domain and FG repeat-containing protein 2 (481 aa).

The Arf-GAP domain maps to 27-153 (EVWCRRVREL…WYVPPDQVKG (127 aa)). Residues 47-70 (CFECAQRGVTYVDITVGSFVCTTC) form a C4-type zinc finger. Disordered stretches follow at residues 150–220 (QVKG…SVKK), 271–309 (SSVFGSLPPAGQASFQAQPTPAGSSQGTPFGATPLAPAS), and 431–481 (QQNG…NPFL). Over residues 157–166 (TKGSASTPVQ) the composition is skewed to polar residues. Residue Lys-173 is modified to N6-acetyllysine. Polar residues-rich tracts occupy residues 188 to 210 (VAASTSSQPVSQSHARTSQARST), 283 to 298 (ASFQAQPTPAGSSQGT), and 454 to 481 (AGISTNPFMTGPSSSPFASKPPTTNPFL).

As to quaternary structure, interacts with EPS15R.

The protein is Arf-GAP domain and FG repeat-containing protein 2 (AGFG2) of Homo sapiens (Human).